The primary structure comprises 35 residues: Small toxic polypeptide LdrB (35 aa).

The helical transmembrane segment at 10 to 30 threads the bilayer; the sequence is FWHDLAAPILAGIITAAIVGW.

Belongs to the Ldr toxic peptide family.

Its subcellular location is the cell inner membrane. Toxic component of a type I toxin-antitoxin (TA) system. Overexpression causes rapid cell killing, probably by disrupting the cell inner membrane and disruption of ATP synthesis. The polypeptide is Small toxic polypeptide LdrB (ldrB) (Escherichia coli (strain K12)).